Consider the following 88-residue polypeptide: Electron transfer flavoprotein regulatory factor 1 (88 aa).

It belongs to the complex I LYR family. As to quaternary structure, homotetramer. Interacts with NDUFAB1. Interacts with ETFA. Interacts with ETFB.

It localises to the mitochondrion. Its function is as follows. Acts as a regulator of the electron transfer flavoprotein by promoting the removal of flavin from the ETF holoenzyme (composed of ETFA and ETFB). This chain is Electron transfer flavoprotein regulatory factor 1, found in Bos taurus (Bovine).